Consider the following 1675-residue polypeptide: Coadhesin (1675 aa).

The Extracellular segment spans residues 1-1356 (QGNYYSYGGT…TIADQADAAK (1356 aa)). Residues 11–160 (TPGTPIGCTN…ICMRVGVESC (150 aa)) form the F5/8 type C 1 domain. TSP type-1 domains lie at 168–220 (NGAW…NDCV), 224–279 (NGGW…QFCP), 281–336 (DGGW…QCCP), 338–393 (HGGW…QTCP), 403–458 (NGNY…IPCP), 460–515 (NGNW…TACP), and 517–572 (DGGW…GPCP). 21 cysteine pairs are disulfide-bonded: Cys-180-Cys-216, Cys-184-Cys-219, Cys-194-Cys-206, Cys-236-Cys-273, Cys-240-Cys-278, Cys-251-Cys-263, Cys-293-Cys-330, Cys-297-Cys-335, Cys-308-Cys-320, Cys-350-Cys-387, Cys-354-Cys-392, Cys-365-Cys-377, Cys-415-Cys-452, Cys-419-Cys-457, Cys-430-Cys-442, Cys-472-Cys-509, Cys-476-Cys-514, Cys-487-Cys-499, Cys-528-Cys-566, Cys-532-Cys-571, and Cys-543-Cys-555. Residues 567–588 (NKGPCPTSPPTISPPTTGSPAD) form a disordered region. 3 VWFA domains span residues 595 to 769 (DLVF…MDRI), 778 to 958 (DIGF…FKAL), and 966 to 1141 (DLTF…ISII). Residues 1144-1198 (PSGLSKWSSWSACSKTCRYLGKAGTQIRTRDCKIPELGCDGMRIDTVECNKMDCE) enclose the TSP type-1 8 domain. Intrachain disulfides connect Cys-1156-Cys-1192, Cys-1160-Cys-1197, and Cys-1175-Cys-1182. In terms of domain architecture, F5/8 type C 2 spans 1192–1336 (CNKMDCEGCG…PCMQAAVFGC (145 aa)). A helical membrane pass occupies residues 1357-1377 (GILIVLWILAGILTFLLLMAC). Over 1378-1675 (CYYCCWHVCC…RGEEWYSRWG (298 aa)) the chain is Cytoplasmic. Positions 1463-1480 (EKHVTAEDVKSEKPKYSE) are enriched in basic and acidic residues. The segment at 1463-1491 (EKHVTAEDVKSEKPKYSEEASSGTIKSGS) is disordered. Over residues 1481-1491 (EASSGTIKSGS) the composition is skewed to polar residues.

Component of the acid-insoluble and acid-soluble organic matrix of the aragonitic skeleton (at protein level).

Its subcellular location is the membrane. This is Coadhesin from Acropora millepora (Staghorn coral).